Here is a 124-residue protein sequence, read N- to C-terminus: Small ribosomal subunit protein uS13 (124 aa).

The disordered stretch occupies residues 99–124; the sequence is RGQRTRTNARTRKGPRKTVGVMRKKS. Residues 101–124 show a composition bias toward basic residues; that stretch reads QRTRTNARTRKGPRKTVGVMRKKS.

It belongs to the universal ribosomal protein uS13 family. In terms of assembly, part of the 30S ribosomal subunit. Forms a loose heterodimer with protein S19. Forms two bridges to the 50S subunit in the 70S ribosome.

In terms of biological role, located at the top of the head of the 30S subunit, it contacts several helices of the 16S rRNA. In the 70S ribosome it contacts the 23S rRNA (bridge B1a) and protein L5 of the 50S subunit (bridge B1b), connecting the 2 subunits; these bridges are implicated in subunit movement. Contacts the tRNAs in the A and P-sites. The chain is Small ribosomal subunit protein uS13 from Caldicellulosiruptor saccharolyticus (strain ATCC 43494 / DSM 8903 / Tp8T 6331).